A 201-amino-acid polypeptide reads, in one-letter code: Kunitz type trypsin inhibitor 104 (201 aa).

Residues methionine 1 to alanine 24 form the signal peptide. 3 cysteine pairs are disulfide-bonded: cysteine 63/cysteine 110, cysteine 161/cysteine 173, and cysteine 166/cysteine 169.

Belongs to the protease inhibitor I3 (leguminous Kunitz-type inhibitor) family. As to quaternary structure, interacts with CP.

It localises to the secreted. The protein resides in the extracellular space. The protein localises to the apoplast. Functionally, protease inhibitor involved in the control of mycorrhiza establishment and arbuscule development during root colonization by arbuscular mycorrhizal (AM) fungi (e.g. Rhizophagus irregularis). This chain is Kunitz type trypsin inhibitor 104, found in Medicago truncatula (Barrel medic).